The primary structure comprises 107 residues: Nucleoid-associated protein BLi00029/BL02358 (107 aa).

The interval 1-27 (MRGGMGNMQKMMKQMQKMQKDMQKAQE) is disordered. Residues 8–17 (MQKMMKQMQK) are compositionally biased toward low complexity. Positions 18-27 (MQKDMQKAQE) are enriched in basic and acidic residues.

The protein belongs to the YbaB/EbfC family. Homodimer.

The protein resides in the cytoplasm. Its subcellular location is the nucleoid. Its function is as follows. Binds to DNA and alters its conformation. May be involved in regulation of gene expression, nucleoid organization and DNA protection. The chain is Nucleoid-associated protein BLi00029/BL02358 from Bacillus licheniformis (strain ATCC 14580 / DSM 13 / JCM 2505 / CCUG 7422 / NBRC 12200 / NCIMB 9375 / NCTC 10341 / NRRL NRS-1264 / Gibson 46).